Consider the following 963-residue polypeptide: Importin-13 (963 aa).

HEAT repeat units lie at residues 24 to 54 (ENVE…QAQV), 56 to 88 (PQAW…KISR), 95 to 135 (TDQY…LSMM), 142 to 179 (AVAD…EFQT), 194 to 231 (LAVE…SWVQ), 236 to 268 (LQDC…NAIS), 276 to 325 (VNTL…ALLD), 330 to 372 (WQSF…DDIL), 375 to 438 (EAEK…YEML), 440 to 476 (AELL…FQSI), 487 to 522 (VVPG…WLAD), 524 to 558 (PVMI…CREC), 562 to 600 (LPPY…LLSA), 603 to 648 (VEEI…SNLF), 676 to 716 (PVVV…VKTL), 720 to 754 (FAPM…VHIF), 761 to 803 (FPPI…ALKR), 815 to 845 (VKAV…TELL), 860 to 893 (EDGR…FALN), and 897 to 931 (FSLL…QQIL). The Importin N-terminal domain occupies 45–111 (AQKWLMQAQV…KAQLFTQITR (67 aa)).

Belongs to the importin beta family. Interacts with UBC9, RAN, RBM8A, eIF-1A and PAX6. Expressed in fetal brain, heart, intestine and kidney.

It localises to the cytoplasm. The protein resides in the nucleus. Functions in nuclear protein import as nuclear transport receptor. Serves as receptor for nuclear localization signals (NLS) in cargo substrates. Is thought to mediate docking of the importin/substrate complex to the nuclear pore complex (NPC) through binding to nucleoporin and the complex is subsequently translocated through the pore by an energy requiring, Ran-dependent mechanism. At the nucleoplasmic side of the NPC, Ran binds to the importin, the importin/substrate complex dissociates and importin is re-exported from the nucleus to the cytoplasm where GTP hydrolysis releases Ran. The directionality of nuclear import is thought to be conferred by an asymmetric distribution of the GTP- and GDP-bound forms of Ran between the cytoplasm and nucleus. Mediates the nuclear import of UBC9, the RBM8A/MAGOH complex, PAX6 and probably other members of the paired homeobox family. Also mediates nuclear export of eIF-1A, and the cytoplasmic release of eIF-1A is triggered by the loading of import substrates onto IPO13. The sequence is that of Importin-13 (IPO13) from Homo sapiens (Human).